Reading from the N-terminus, the 388-residue chain is Protein-glutamate methylesterase/protein-glutamine glutaminase 1 (388 aa).

Residues Gln4–Leu121 enclose the Response regulatory domain. Asp55 bears the 4-aspartylphosphate mark. Residues Ser149–Ser190 form a disordered region. Residues Gly153–Ser169 are compositionally biased toward low complexity. Over residues Leu174–Ala189 the composition is skewed to polar residues. One can recognise a CheB-type methylesterase domain in the interval Pro188–Gly388. Residues Ser207, His234, and Asp330 contribute to the active site.

Belongs to the CheB family. In terms of processing, phosphorylated by CheA. Phosphorylation of the N-terminal regulatory domain activates the methylesterase activity.

Its subcellular location is the cytoplasm. It carries out the reaction [protein]-L-glutamate 5-O-methyl ester + H2O = L-glutamyl-[protein] + methanol + H(+). It catalyses the reaction L-glutaminyl-[protein] + H2O = L-glutamyl-[protein] + NH4(+). Its function is as follows. Involved in chemotaxis. Part of a chemotaxis signal transduction system that modulates chemotaxis in response to various stimuli. Catalyzes the demethylation of specific methylglutamate residues introduced into the chemoreceptors (methyl-accepting chemotaxis proteins or MCP) by CheR. Also mediates the irreversible deamidation of specific glutamine residues to glutamic acid. The polypeptide is Protein-glutamate methylesterase/protein-glutamine glutaminase 1 (Shewanella denitrificans (strain OS217 / ATCC BAA-1090 / DSM 15013)).